A 616-amino-acid polypeptide reads, in one-letter code: Dihydroxy-acid dehydratase (616 aa).

D81 provides a ligand contact to Mg(2+). C122 is a [2Fe-2S] cluster binding site. Residues D123 and K124 each coordinate Mg(2+). K124 carries the N6-carboxylysine modification. C195 is a [2Fe-2S] cluster binding site. Residue E491 participates in Mg(2+) binding. S517 functions as the Proton acceptor in the catalytic mechanism.

Belongs to the IlvD/Edd family. In terms of assembly, homodimer. Requires [2Fe-2S] cluster as cofactor. Mg(2+) serves as cofactor.

The enzyme catalyses (2R)-2,3-dihydroxy-3-methylbutanoate = 3-methyl-2-oxobutanoate + H2O. The catalysed reaction is (2R,3R)-2,3-dihydroxy-3-methylpentanoate = (S)-3-methyl-2-oxopentanoate + H2O. It functions in the pathway amino-acid biosynthesis; L-isoleucine biosynthesis; L-isoleucine from 2-oxobutanoate: step 3/4. The protein operates within amino-acid biosynthesis; L-valine biosynthesis; L-valine from pyruvate: step 3/4. Its function is as follows. Functions in the biosynthesis of branched-chain amino acids. Catalyzes the dehydration of (2R,3R)-2,3-dihydroxy-3-methylpentanoate (2,3-dihydroxy-3-methylvalerate) into 2-oxo-3-methylpentanoate (2-oxo-3-methylvalerate) and of (2R)-2,3-dihydroxy-3-methylbutanoate (2,3-dihydroxyisovalerate) into 2-oxo-3-methylbutanoate (2-oxoisovalerate), the penultimate precursor to L-isoleucine and L-valine, respectively. This Salmonella agona (strain SL483) protein is Dihydroxy-acid dehydratase.